The sequence spans 225 residues: Protein GrpE (225 aa).

Residues 1-15 show a composition bias toward polar residues; sequence MSGDASTPEQDQNVV. 2 disordered regions span residues 1 to 48 and 198 to 225; these read MSGD…DRMQ and VSMG…AEEA. Low complexity predominate over residues 201–225; sequence GPGPSDPGSAPAEAAAAPDQTAEEA.

It belongs to the GrpE family. In terms of assembly, homodimer.

The protein resides in the cytoplasm. Its function is as follows. Participates actively in the response to hyperosmotic and heat shock by preventing the aggregation of stress-denatured proteins, in association with DnaK and GrpE. It is the nucleotide exchange factor for DnaK and may function as a thermosensor. Unfolded proteins bind initially to DnaJ; upon interaction with the DnaJ-bound protein, DnaK hydrolyzes its bound ATP, resulting in the formation of a stable complex. GrpE releases ADP from DnaK; ATP binding to DnaK triggers the release of the substrate protein, thus completing the reaction cycle. Several rounds of ATP-dependent interactions between DnaJ, DnaK and GrpE are required for fully efficient folding. In Synechococcus sp. (strain CC9605), this protein is Protein GrpE.